The following is a 388-amino-acid chain: Protein RecA (388 aa).

G79–T86 contributes to the ATP binding site. Positions I347–E388 are disordered. A compositionally biased stretch (basic and acidic residues) spans T357–A369. Positions V370–E388 are enriched in acidic residues.

This sequence belongs to the RecA family.

Its subcellular location is the cytoplasm. Can catalyze the hydrolysis of ATP in the presence of single-stranded DNA, the ATP-dependent uptake of single-stranded DNA by duplex DNA, and the ATP-dependent hybridization of homologous single-stranded DNAs. It interacts with LexA causing its activation and leading to its autocatalytic cleavage. This is Protein RecA from Streptococcus pneumoniae (strain Hungary19A-6).